The following is an 892-amino-acid chain: Putative GTP diphosphokinase RSH1, chloroplastic (892 aa).

The N-terminal 52 residues, 1 to 52 (MQPPTGAVSGSSSSSLECVSSCRTSWRGGGRPYECSVLSCAWNAPRALTGAL), are a transit peptide targeting the chloroplast. One can recognise an HD domain in the interval 184–291 (FIIHPVEVAR…VKLADRLHNM (108 aa)). Residues 574–637 (LGSRVFVFTP…ANAEVVEIII (64 aa)) form the TGS domain. An ACT domain is found at 809–880 (WLCIVCVDRK…MILGVLGWSV (72 aa)).

Belongs to the RelA/SpoT family.

It localises to the plastid. It is found in the chloroplast. The catalysed reaction is GTP + ATP = guanosine 3'-diphosphate 5'-triphosphate + AMP. May be involved in a rapid plant ppGpp (guanosine 3'-diphosphate 5'-diphosphate)-mediated response to pathogens and other stresses. This is Putative GTP diphosphokinase RSH1, chloroplastic (RSH1) from Oryza sativa subsp. japonica (Rice).